Reading from the N-terminus, the 56-residue chain is Large ribosomal subunit protein bL32 (56 aa).

Positions M1 to Q26 are disordered. A compositionally biased stretch (basic residues) spans K7–R16.

The protein belongs to the bacterial ribosomal protein bL32 family.

This chain is Large ribosomal subunit protein bL32, found in Shewanella amazonensis (strain ATCC BAA-1098 / SB2B).